The sequence spans 279 residues: MIHFAKMHGLGNDFMVVDGVTQNVFFSPEQIKRLADRNFGVGFDQLLLVEPPYDPDLDFHYRIFNADGGEVEQCGNGARCFARFVRNKGLTNKHKIKVSTSNGKITLRLERDGNVTVNMGVPVLDPSKIPFNAKRVEKTYLLQTSSSHAMETFLCGAISMGNPHCVLEVEDIEHAEVERIGALLTQNERFPKGVNVGFMQVIDAGHIKLRVYERGAAETLACGTGACAAAAVGQLQGKLNKMVRVDLPGGTLTINWEGEGNPLWMTGPAEHVYDGQIPQ.

Residues Asn12, Gln45, and Asn65 each coordinate substrate. Catalysis depends on Cys74, which acts as the Proton donor. Residues 75–76, Asn162, Asn195, and 213–214 each bind substrate; these read GN and ER. Cys222 acts as the Proton acceptor in catalysis. 223 to 224 serves as a coordination point for substrate; sequence GT.

Belongs to the diaminopimelate epimerase family. As to quaternary structure, homodimer.

It localises to the cytoplasm. It carries out the reaction (2S,6S)-2,6-diaminopimelate = meso-2,6-diaminopimelate. The protein operates within amino-acid biosynthesis; L-lysine biosynthesis via DAP pathway; DL-2,6-diaminopimelate from LL-2,6-diaminopimelate: step 1/1. Its function is as follows. Catalyzes the stereoinversion of LL-2,6-diaminopimelate (L,L-DAP) to meso-diaminopimelate (meso-DAP), a precursor of L-lysine and an essential component of the bacterial peptidoglycan. The protein is Diaminopimelate epimerase of Shewanella woodyi (strain ATCC 51908 / MS32).